The sequence spans 1006 residues: Transcription factor tau subunit sfc4 (1006 aa).

Residues 64-91 (GLWSDEESDYEGSDDESNFSKTASRTED) are disordered. The segment covering 66-80 (WSDEESDYEGSDDES) has biased composition (acidic residues). TPR repeat units lie at residues 133–166 (QQML…DNNV), 205–238 (HELW…KPPN), 277–310 (ASIL…FYQY), 396–429 (HLFR…PPDY), 431–464 (WGML…EPAQ), and 466–499 (IGLW…DNSN). The stretch at 506–554 (LAEINELQDNRDAALEIVTNIFEQRRNINELEREQSQNEDHEKNVGSQL) forms a coiled coil. 2 TPR repeats span residues 841-874 (PVLV…NPDC) and 924-957 (QEAL…SPMS).

In terms of assembly, component of the TFIIIC complex including sfc1, sfc3, sfc4, sfc6 and sfc7. The subunits are organized in two globular domains, tauA and tauB, connected by a proteolysis-sensitive and flexible linker. Interacts with sfc1, sfc3 and sfc6. Phosphorylated.

The protein localises to the nucleus. In terms of biological role, TFIIIC mediates tRNA and 5S RNA gene activation by binding to intragenic promoter elements. Upstream of the transcription start site, TFIIIC assembles the initiation complex TFIIIB-TFIIIC-tDNA, which is sufficient for RNA polymerase III recruitment and function. Part of the tauA domain of TFIIIC that binds boxA DNA promoter sites of tRNA and similar genes. Sfc4 is the TFIIIB assembling subunit of TFIIIC. In Schizosaccharomyces pombe (strain 972 / ATCC 24843) (Fission yeast), this protein is Transcription factor tau subunit sfc4.